Consider the following 289-residue polypeptide: tRNA pseudouridine synthase A (289 aa).

The active-site Nucleophile is Asp53. Position 119 (Tyr119) interacts with substrate.

Belongs to the tRNA pseudouridine synthase TruA family. Homodimer.

The enzyme catalyses uridine(38/39/40) in tRNA = pseudouridine(38/39/40) in tRNA. Functionally, formation of pseudouridine at positions 38, 39 and 40 in the anticodon stem and loop of transfer RNAs. The polypeptide is tRNA pseudouridine synthase A (Corynebacterium glutamicum (strain ATCC 13032 / DSM 20300 / JCM 1318 / BCRC 11384 / CCUG 27702 / LMG 3730 / NBRC 12168 / NCIMB 10025 / NRRL B-2784 / 534)).